The chain runs to 315 residues: Porphobilinogen deaminase (315 aa).

Cys242 is subject to S-(dipyrrolylmethanemethyl)cysteine.

The protein belongs to the HMBS family. As to quaternary structure, monomer. Dipyrromethane serves as cofactor.

The enzyme catalyses 4 porphobilinogen + H2O = hydroxymethylbilane + 4 NH4(+). Its pathway is porphyrin-containing compound metabolism; protoporphyrin-IX biosynthesis; coproporphyrinogen-III from 5-aminolevulinate: step 2/4. In terms of biological role, tetrapolymerization of the monopyrrole PBG into the hydroxymethylbilane pre-uroporphyrinogen in several discrete steps. This is Porphobilinogen deaminase from Syntrophotalea carbinolica (strain DSM 2380 / NBRC 103641 / GraBd1) (Pelobacter carbinolicus).